Reading from the N-terminus, the 873-residue chain is K(+)/H(+) antiporter 1 (873 aa).

Residues 1 to 23 are Extracellular-facing; the sequence is MANTVGGILSGVNPFHYNSSSPL. The helical transmembrane segment at 24-44 threads the bilayer; the sequence is TLFLFQACLILLVCNLIHIPF. Over 45–51 the chain is Cytoplasmic; it reads SMMRQPK. Residues 52–72 traverse the membrane as a helical segment; sequence VISEVISGVILGPTIFGQIPN. Residues 73–82 lie on the Extracellular side of the membrane; the sequence is YTNTIFPTSS. Residues 83–103 form a helical membrane-spanning segment; that stretch reads IPGLNLVANLGIILFMFFLGL. Topologically, residues 104–116 are cytoplasmic; the sequence is EVDIAFIKKHLKK. Residues 117 to 137 form a helical membrane-spanning segment; that stretch reads ALVIGIVTLAVPFGFGCLLAI. Over 138–154 the chain is Extracellular; it reads PLFHTYANKTEGERHIK. A helical membrane pass occupies residues 155 to 175; the sequence is FSVFMVFIAVSISVTAFPVLC. Residues 176 to 188 are Cytoplasmic-facing; that stretch reads RILNELRLIKDRA. Residues 189-209 form a helical membrane-spanning segment; sequence GIVVLAAGIINDIMGWILLAL. The Extracellular portion of the chain corresponds to 210 to 220; the sequence is SIILSSAEGSP. The chain crosses the membrane as a helical span at residues 221–241; the sequence is VNTVYILLITFAWFLIYFFPL. Topologically, residues 242–267 are cytoplasmic; it reads KYLLRWVLIRTHELDRSKPSPLATMC. A helical transmembrane segment spans residues 268-288; it reads ILFIMFISAYFTDIIGVHPIF. The Extracellular portion of the chain corresponds to 289 to 316; it reads GAFIAGLVVPRDDHYVVKLTERMEDIPN. Residues 317-337 form a helical membrane-spanning segment; the sequence is IVFIPIYFAVAGLNVDLTLLN. The Cytoplasmic portion of the chain corresponds to 338 to 341; that stretch reads EGRD. Residues 342-362 traverse the membrane as a helical segment; it reads WGYVFATIGIAIFTKIISGTL. Residues 363–375 are Extracellular-facing; it reads TAKLTGLFWREAT. Residues 376-396 form a helical membrane-spanning segment; it reads AAGVLMSCKGIVEIVVLTVGL. Residues 397–404 lie on the Cytoplasmic side of the membrane; that stretch reads NAGIISRK. The helical transmembrane segment at 405–425 threads the bilayer; the sequence is IFGMFVLMALVSTFVTTPLTQ. Residues 426–726 are Extracellular-facing; it reads LVYPDSYRDG…DRFKRKRFNL (301 aa). Position 557 is a phosphoserine (serine 557). Lysine 562 participates in a covalent cross-link: Glycyl lysine isopeptide (Lys-Gly) (interchain with G-Cter in ubiquitin). Residues 727–747 traverse the membrane as a helical segment; it reads LLPKPYLTQSDYLGLYLLLLI. The Cytoplasmic segment spans residues 748 to 873; it reads CYRDGYNNDN…TLIVHHFSSE (126 aa).

It belongs to the monovalent cation:proton antiporter 2 (CPA2) transporter (TC 2.A.37) family.

Its subcellular location is the membrane. In terms of biological role, potassium-proton antiport. This Saccharomyces cerevisiae (strain ATCC 204508 / S288c) (Baker's yeast) protein is K(+)/H(+) antiporter 1 (KHA1).